A 264-amino-acid polypeptide reads, in one-letter code: Orotidine 5'-phosphate decarboxylase (264 aa).

Residues Asp-37, 59–61 (KTH), 91–100 (DRKFADIGNT), Tyr-217, and Arg-235 contribute to the substrate site. Lys-93 acts as the Proton donor in catalysis.

It belongs to the OMP decarboxylase family.

The catalysed reaction is orotidine 5'-phosphate + H(+) = UMP + CO2. It functions in the pathway pyrimidine metabolism; UMP biosynthesis via de novo pathway; UMP from orotate: step 2/2. This chain is Orotidine 5'-phosphate decarboxylase (URA3), found in Torulaspora delbrueckii (Yeast).